A 235-amino-acid polypeptide reads, in one-letter code: Claudin-16 (235 aa).

The Cytoplasmic segment spans residues 1–3; sequence MRD. The helical transmembrane segment at 4–24 threads the bilayer; sequence LLQYIACFFAFFSAGFLIVAT. The Extracellular portion of the chain corresponds to 25–79; the sequence is WTDCWMVNADDSLEVSTKCRGLWWECVTNAFDGIRTCDEYDSILAEHPLKLVVTR. The helical transmembrane segment at 80 to 100 threads the bilayer; the sequence is ALMITADILAGFGFLTLLLGL. Topologically, residues 101 to 115 are cytoplasmic; it reads DCVKFLPDEPYIKVR. Residues 116 to 136 traverse the membrane as a helical segment; it reads ICFVAGATLLIAGTPGIIGSV. Residues 137 to 169 are Extracellular-facing; sequence WYAVDVYVERSTLVLHNIFLGIQYKFGWSCWLG. A helical membrane pass occupies residues 170-190; it reads MAGSLGCFLAGAVLTCCLYLF. The Cytoplasmic portion of the chain corresponds to 191–235; it reads KDVGPERNYPYSLRKAYSAAGVSMAKSYSAPRTETAKMYAVDTRV. The Interaction with TJP1 motif lies at 233-235; it reads TRV.

It belongs to the claudin family. As to quaternary structure, can form heteropolymeric tight junction strands with other claudins. Interacts with CLDN19. Interacts (via PDZ-binding motif TRV) with TJP1 (via PDZ domain). Cannot form tight junction strands on its own. As to expression, kidney-specific, including the thick ascending limb of Henle (TAL).

Its subcellular location is the cell junction. The protein localises to the tight junction. It localises to the cell membrane. It catalyses the reaction Mg(2+)(in) = Mg(2+)(out). The enzyme catalyses Ca(2+)(in) = Ca(2+)(out). It carries out the reaction Na(+)(in) = Na(+)(out). The catalysed reaction is K(+)(in) = K(+)(out). It catalyses the reaction Rb(+)(in) = Rb(+)(out). The enzyme catalyses Cs(+)(in) = Cs(+)(out). It carries out the reaction Li(+)(in) = Li(+)(out). Forms paracellular channels: coassembles with CLDN19 into tight junction strands with cation-selective channels through the strands, conveying epithelial permeability in a process known as paracellular tight junction permeability. Involved in the maintenance of ion gradients along the nephron. In the thick ascending limb (TAL) of Henle's loop, facilitates sodium paracellular permeability from the interstitial compartment to the lumen, contributing to the lumen-positive transepithelial potential that drives paracellular magnesium and calcium reabsorption. The protein is Claudin-16 of Homo sapiens (Human).